The sequence spans 327 residues: Zinc transport protein ZntB (327 aa).

Residues 1–271 (MDVVEGKALQ…AMNRRTYTMS (271 aa)) are Cytoplasmic-facing. A helical transmembrane segment spans residues 272-292 (LLAMVFLPTTFLTGLFGVNLG). Residues 293–300 (GIPGNTDA) are Periplasmic-facing. A helical membrane pass occupies residues 301 to 321 (FGFTIFCMMLVVLVLSVAWWL). Over 322–327 (KRSKWL) the chain is Cytoplasmic.

It belongs to the CorA metal ion transporter (MIT) (TC 1.A.35) family.

It is found in the cell inner membrane. The catalysed reaction is Zn(2+)(out) + H(+)(out) = Zn(2+)(in) + H(+)(in). In terms of biological role, zinc transporter. Acts as a Zn(2+):proton symporter, which likely mediates zinc ion uptake. The polypeptide is Zinc transport protein ZntB (Yersinia pseudotuberculosis serotype O:1b (strain IP 31758)).